The sequence spans 424 residues: GTPase Obg (424 aa).

Positions M1–L159 constitute an Obg domain. The OBG-type G domain maps to A160–S330. Residues G166–S173, F191–T195, D212–G215, N282–D285, and S311–L313 contribute to the GTP site. Positions 173 and 193 each coordinate Mg(2+). Positions N347–E424 constitute an OCT domain.

The protein belongs to the TRAFAC class OBG-HflX-like GTPase superfamily. OBG GTPase family. As to quaternary structure, monomer. The cofactor is Mg(2+).

Its subcellular location is the cytoplasm. In terms of biological role, an essential GTPase which binds GTP, GDP and possibly (p)ppGpp with moderate affinity, with high nucleotide exchange rates and a fairly low GTP hydrolysis rate. Plays a role in control of the cell cycle, stress response, ribosome biogenesis and in those bacteria that undergo differentiation, in morphogenesis control. The sequence is that of GTPase Obg from Caldanaerobacter subterraneus subsp. tengcongensis (strain DSM 15242 / JCM 11007 / NBRC 100824 / MB4) (Thermoanaerobacter tengcongensis).